The following is a 133-amino-acid chain: Cytidine deaminase (133 aa).

Residues 3-131 (VDLDWVHHKL…EILKGGFRSY (129 aa)) form the CMP/dCMP-type deaminase domain. 43–45 (NIE) is a substrate binding site. Residue C54 coordinates Zn(2+). E56 acts as the Proton donor in catalysis. C89 and C92 together coordinate Zn(2+).

The protein belongs to the cytidine and deoxycytidylate deaminase family. As to quaternary structure, homodimer. The cofactor is Zn(2+).

The enzyme catalyses cytidine + H2O + H(+) = uridine + NH4(+). The catalysed reaction is 2'-deoxycytidine + H2O + H(+) = 2'-deoxyuridine + NH4(+). This enzyme scavenges exogenous and endogenous cytidine and 2'-deoxycytidine for UMP synthesis. The polypeptide is Cytidine deaminase (cdd) (Mycoplasma pneumoniae (strain ATCC 29342 / M129 / Subtype 1) (Mycoplasmoides pneumoniae)).